The following is a 584-amino-acid chain: Alpha-glucosidase MAL12 (584 aa).

Asp214 functions as the Nucleophile in the catalytic mechanism. Glu276 serves as the catalytic Proton donor.

It belongs to the glycosyl hydrolase 13 family.

It catalyses the reaction Hydrolysis of terminal, non-reducing (1-&gt;4)-linked alpha-D-glucose residues with release of alpha-D-glucose.. The sequence is that of Alpha-glucosidase MAL12 (MAL12) from Saccharomyces cerevisiae (strain ATCC 204508 / S288c) (Baker's yeast).